A 35-amino-acid polypeptide reads, in one-letter code: Bacteriocin SRCAM 1580 (35 aa).

This sequence belongs to the bacteriocin class IIA/YGNGV family.

The protein resides in the secreted. Its function is as follows. Bacteriocin with antibacterial activity against C.jejuni. This chain is Bacteriocin SRCAM 1580, found in Niallia circulans (Bacillus circulans).